The chain runs to 555 residues: Urocanate hydratase (555 aa).

NAD(+) is bound by residues 52-53 (GG), Gln130, 176-178 (GMG), Glu196, Arg201, 242-243 (NA), 263-267 (QTSAH), 273-274 (YL), and Tyr322. Residue Cys410 is part of the active site. Gly492 lines the NAD(+) pocket.

Belongs to the urocanase family. Requires NAD(+) as cofactor.

The protein resides in the cytoplasm. It catalyses the reaction 4-imidazolone-5-propanoate = trans-urocanate + H2O. It functions in the pathway amino-acid degradation; L-histidine degradation into L-glutamate; N-formimidoyl-L-glutamate from L-histidine: step 2/3. Its function is as follows. Catalyzes the conversion of urocanate to 4-imidazolone-5-propionate. This Shewanella baltica (strain OS223) protein is Urocanate hydratase.